The sequence spans 502 residues: MTRLILAIDQGTTSTRALLFRPDTRIAALAQAEFPQHFPASGWVEHEPEDLWRSTLDTCRAALRQAGAGAREVAAIGITNQRETTLIWDRRTGEAVHRAIVWQDRRTAGLCARLKEQGHEPLVSERTGLLLDPYFAGTKIAWILDQVPGARARADAGELAFGTVDSYLLWRLTGGRVHVTDATNASRTLLFDIHRGAWDDDLLRLFDIPRSLLPEVRDSSGDFGTTDPDLFGAPIPIRGVAGDQQAATVGQACFRPGMVKSTYGTGCFALLNTGPQPVASRNKLLTTIAYQLGGERTYALEGSIFVAGAAVQWLRDGLGVVASAAETGDLAERADPAQEVYLVPAFVGLGAPYWEPDVRGALYGLTRGTRPAELARAALESVCYQTADLLAAMRADWPDGDGSGTVLRVDGGMVASDWTMQRLADLLAAPVDRPEVKETTALGAAYLAGLACGLYPEPERFADHWRLERRFTPAMDGPVRERKLAGWRKAVGCLLGRPVPLP.

T12 contributes to the ADP binding site. Residues T12, T13, and S14 each coordinate ATP. Residue T12 participates in sn-glycerol 3-phosphate binding. Residue R16 participates in ADP binding. R82, E83, Y134, and D243 together coordinate sn-glycerol 3-phosphate. Glycerol-binding residues include R82, E83, Y134, D243, and Q244. T265 and G308 together coordinate ADP. T265, G308, Q312, and G412 together coordinate ATP. G412 contributes to the ADP binding site.

It belongs to the FGGY kinase family.

The enzyme catalyses glycerol + ATP = sn-glycerol 3-phosphate + ADP + H(+). The protein operates within polyol metabolism; glycerol degradation via glycerol kinase pathway; sn-glycerol 3-phosphate from glycerol: step 1/1. With respect to regulation, inhibited by fructose 1,6-bisphosphate (FBP). Key enzyme in the regulation of glycerol uptake and metabolism. Catalyzes the phosphorylation of glycerol to yield sn-glycerol 3-phosphate. This chain is Glycerol kinase, found in Methylobacterium nodulans (strain LMG 21967 / CNCM I-2342 / ORS 2060).